The primary structure comprises 421 residues: MANVKINNISARQILDSRGYPTIEVQITLSNNVFAKASIPSGASVGKFEAVELRDHDTNYYHGYGVTKAVNLINSEIGQKIIKLETLDQEKIDNALIEIDGTNNKSRVGANSILAISLAVAKAAASTLNIPLYQYLGGITAKILPTPLINIINGGMHADNNLDFQEFMIIPHGANSFEDAIRMSSEVFHTLKKILKQKQYNTNVGDEGGFAPNIKDNTEVFDIIIDAIEKSGYKVYKDFSLGLDVAASTFYKNEKYKFSDYQFSTHELVEYYKNIVTQYPIISLEDPIAEEDTLGWKMITKELGDKIQIVGDDLFVTNCKLIKNGIDNNMANAVLIKPNQIGTLTETLNAIRLAQKNNYNVILSHRSGETNDTTISHIAVAVNCGQIKTGSLSRSERLAKYNELLYIEKLLNTSAIYQGML.

(2R)-2-phosphoglycerate is bound at residue Q165. The active-site Proton donor is the E207. Mg(2+) is bound by residues D244, E285, and D312. K337, R366, S367, and K388 together coordinate (2R)-2-phosphoglycerate. The active-site Proton acceptor is K337.

The protein belongs to the enolase family. The cofactor is Mg(2+).

The protein resides in the cytoplasm. Its subcellular location is the secreted. It is found in the cell surface. It catalyses the reaction (2R)-2-phosphoglycerate = phosphoenolpyruvate + H2O. The protein operates within carbohydrate degradation; glycolysis; pyruvate from D-glyceraldehyde 3-phosphate: step 4/5. In terms of biological role, catalyzes the reversible conversion of 2-phosphoglycerate (2-PG) into phosphoenolpyruvate (PEP). It is essential for the degradation of carbohydrates via glycolysis. The protein is Enolase of Ehrlichia ruminantium (strain Welgevonden).